The following is a 368-amino-acid chain: F-box only protein 28 (368 aa).

Residues 1-11 (MAAASEERMAE) show a composition bias toward basic and acidic residues. The segment at 1–57 (MAAASEERMAEEGGGGHGDGGSPSAIASTQRLPPPPPPQPPQPGSQAPPAPALAPDQ) is disordered. The span at 12–21 (EGGGGHGDGG) shows a compositional bias: gly residues. A compositionally biased stretch (pro residues) spans 32–52 (LPPPPPPQPPQPGSQAPPAPA). The 49-residue stretch at 61–109 (NNTLVALPIVAIENILSFMSYDEISQLRLVCKRMDLVCQRMLNQGFLKV) folds into the F-box domain. Phosphoserine is present on residues Ser235 and Ser242. Thr270 bears the Phosphothreonine mark. The disordered stretch occupies residues 328–368 (MESAVGNSSGSGQSEESPRKRKKAAEAIDSLRKSKRLRNRK). The residue at position 344 (Ser344) is a Phosphoserine.

In terms of assembly, part of a SCF (SKP1-cullin-F-box) protein ligase complex.

The protein localises to the chromosome. The protein resides in the centromere. Its subcellular location is the kinetochore. In terms of biological role, probably recognizes and binds to some phosphorylated proteins and promotes their ubiquitination and degradation. The protein is F-box only protein 28 (FBXO28) of Bos taurus (Bovine).